The primary structure comprises 600 residues: NADH-quinone oxidoreductase subunit C/D (600 aa).

Residues 1–190 are NADH dehydrogenase I subunit C; it reads MVNNMTDLTA…DPFELTKAKQ (190 aa). The tract at residues 214 to 600 is NADH dehydrogenase I subunit D; that stretch reads DFMFLNLGPN…IDFVMSDVDR (387 aa).

The protein in the N-terminal section; belongs to the complex I 30 kDa subunit family. This sequence in the C-terminal section; belongs to the complex I 49 kDa subunit family. NDH-1 is composed of 13 different subunits. Subunits NuoB, CD, E, F, and G constitute the peripheral sector of the complex.

Its subcellular location is the cell inner membrane. The enzyme catalyses a quinone + NADH + 5 H(+)(in) = a quinol + NAD(+) + 4 H(+)(out). Functionally, NDH-1 shuttles electrons from NADH, via FMN and iron-sulfur (Fe-S) centers, to quinones in the respiratory chain. The immediate electron acceptor for the enzyme in this species is believed to be ubiquinone. Couples the redox reaction to proton translocation (for every two electrons transferred, four hydrogen ions are translocated across the cytoplasmic membrane), and thus conserves the redox energy in a proton gradient. The protein is NADH-quinone oxidoreductase subunit C/D of Salmonella arizonae (strain ATCC BAA-731 / CDC346-86 / RSK2980).